The primary structure comprises 380 residues: Probable protein phosphatase 2C 34 (380 aa).

The region spanning 32–335 (AAGEFSMAAA…DDISVIVVYL (304 aa)) is the PPM-type phosphatase domain. 4 residues coordinate Mn(2+): aspartate 66, glycine 67, aspartate 267, and aspartate 326.

The protein belongs to the PP2C family. It depends on Mg(2+) as a cofactor. Requires Mn(2+) as cofactor.

The catalysed reaction is O-phospho-L-seryl-[protein] + H2O = L-seryl-[protein] + phosphate. It carries out the reaction O-phospho-L-threonyl-[protein] + H2O = L-threonyl-[protein] + phosphate. This is Probable protein phosphatase 2C 34 (BIPP2C2) from Oryza sativa subsp. indica (Rice).